Here is a 422-residue protein sequence, read N- to C-terminus: Glutamyl-tRNA reductase (422 aa).

Substrate-binding positions include 50 to 53 (TCNR), S110, 115 to 117 (ETQ), and Q121. The Nucleophile role is filled by C51. NADP(+) is bound at residue 190-195 (GAGEMS).

It belongs to the glutamyl-tRNA reductase family. In terms of assembly, homodimer.

The catalysed reaction is (S)-4-amino-5-oxopentanoate + tRNA(Glu) + NADP(+) = L-glutamyl-tRNA(Glu) + NADPH + H(+). The protein operates within porphyrin-containing compound metabolism; protoporphyrin-IX biosynthesis; 5-aminolevulinate from L-glutamyl-tRNA(Glu): step 1/2. In terms of biological role, catalyzes the NADPH-dependent reduction of glutamyl-tRNA(Glu) to glutamate 1-semialdehyde (GSA). This Campylobacter fetus subsp. fetus (strain 82-40) protein is Glutamyl-tRNA reductase.